A 451-amino-acid polypeptide reads, in one-letter code: UDP-N-acetylmuramoylalanine--D-glutamate ligase (451 aa).

ATP is bound at residue 119-125 (GSNGKTT).

This sequence belongs to the MurCDEF family.

The protein localises to the cytoplasm. The catalysed reaction is UDP-N-acetyl-alpha-D-muramoyl-L-alanine + D-glutamate + ATP = UDP-N-acetyl-alpha-D-muramoyl-L-alanyl-D-glutamate + ADP + phosphate + H(+). It participates in cell wall biogenesis; peptidoglycan biosynthesis. Cell wall formation. Catalyzes the addition of glutamate to the nucleotide precursor UDP-N-acetylmuramoyl-L-alanine (UMA). The polypeptide is UDP-N-acetylmuramoylalanine--D-glutamate ligase (Bacillus cytotoxicus (strain DSM 22905 / CIP 110041 / 391-98 / NVH 391-98)).